A 281-amino-acid chain; its full sequence is uncharacterized protein (281 aa).

The stretch at 242-281 forms a coiled coil; it reads IDKQSRKKNIIREINDIKSKINDLSNYMDNLISELDDLFD.

This is an uncharacterized protein from Acanthamoeba polyphaga (Amoeba).